A 317-amino-acid polypeptide reads, in one-letter code: Olfactory receptor 2F2 (317 aa).

Residues 1–25 (MEIDNQTWVREFILLGLSSDWCTQI) lie on the Extracellular side of the membrane. Asparagine 5 carries N-linked (GlcNAc...) asparagine glycosylation. A helical membrane pass occupies residues 26–49 (SLFSLFLVTYLMTVLGNCLIVLLI). Over 50 to 57 (RLDSRLHT) the chain is Cytoplasmic. Residues 58-79 (PMYFFLTNLSLVDVSYATSVVP) form a helical membrane-spanning segment. At 80 to 100 (QLLAHFLAEHKAIPFQSCAAQ) the chain is on the extracellular side. A disulfide bridge links cysteine 97 with cysteine 189. The helical transmembrane segment at 101–120 (LFFSLALGGIEFVLLAVMAY) threads the bilayer. Residues 121-139 (DRHVAVSDRLRYSAIMHGG) lie on the Cytoplasmic side of the membrane. A helical transmembrane segment spans residues 140-158 (LCARLAITSWVSGSINSLV). Over 159 to 195 (QTAITFQLPMCTNKFIDHISCELLAVVRLACVDTSSN) the chain is Extracellular. The helical transmembrane segment at 196 to 219 (EAAIMVSSIVLLMTPFCLVLLSYI) threads the bilayer. Topologically, residues 220-236 (RIISTILKIQSREGRKK) are cytoplasmic. Residues 237–259 (AFHTCASHLTVVALCYGTTIFTY) form a helical membrane-spanning segment. The Extracellular portion of the chain corresponds to 260 to 272 (IQPHSGPSVLQEK). Residues 273-292 (LISVFYAIVMPLLNPVIYSL) form a helical membrane-spanning segment. The Cytoplasmic portion of the chain corresponds to 293 to 317 (RNKEVKGAWHKLLEKFSGLTSKLGT).

This sequence belongs to the G-protein coupled receptor 1 family.

The protein resides in the cell membrane. Functionally, odorant receptor. This is Olfactory receptor 2F2 (OR2F2) from Homo sapiens (Human).